Here is a 279-residue protein sequence, read N- to C-terminus: Fatty acid elongase 2 (279 aa).

7 consecutive transmembrane segments (helical) span residues 16–36 (LMLE…ALVW), 61–81 (AIIV…IVVV), 112–132 (FWIG…MFLL), 138–158 (PPFL…HTYC), 164–184 (MVLF…YFAM), 196–216 (FAPF…LVTT), and 242–262 (MGVI…LNSY). The short motif at 142–146 (HWYHH) is the HxxHH motif element. The active-site Nucleophile is the His-145.

The protein belongs to the ELO family.

It localises to the endoplasmic reticulum membrane. The catalysed reaction is an acyl-CoA + malonyl-CoA + H(+) = a 3-oxoacyl-CoA + CO2 + CoA. It functions in the pathway lipid metabolism; fatty acid biosynthesis. Functionally, involved in the synthesis of fatty acids. Elongates C10 fatty acids to C14. Required for the maintenance of the global lipidome profile in this parasite. The protein is Fatty acid elongase 2 of Trypanosoma cruzi (strain CL Brener).